The following is a 274-amino-acid chain: Formamidopyrimidine-DNA glycosylase (274 aa).

Residue proline 2 is the Schiff-base intermediate with DNA of the active site. The active-site Proton donor is the glutamate 3. Lysine 57 (proton donor; for beta-elimination activity) is an active-site residue. DNA contacts are provided by histidine 90, arginine 109, and lysine 150. Residues phenylalanine 235–histidine 269 form an FPG-type zinc finger. The active-site Proton donor; for delta-elimination activity is the arginine 259.

Belongs to the FPG family. As to quaternary structure, monomer. It depends on Zn(2+) as a cofactor.

The enzyme catalyses Hydrolysis of DNA containing ring-opened 7-methylguanine residues, releasing 2,6-diamino-4-hydroxy-5-(N-methyl)formamidopyrimidine.. It catalyses the reaction 2'-deoxyribonucleotide-(2'-deoxyribose 5'-phosphate)-2'-deoxyribonucleotide-DNA = a 3'-end 2'-deoxyribonucleotide-(2,3-dehydro-2,3-deoxyribose 5'-phosphate)-DNA + a 5'-end 5'-phospho-2'-deoxyribonucleoside-DNA + H(+). Functionally, involved in base excision repair of DNA damaged by oxidation or by mutagenic agents. Acts as a DNA glycosylase that recognizes and removes damaged bases. Has a preference for oxidized purines, such as 7,8-dihydro-8-oxoguanine (8-oxoG). Has AP (apurinic/apyrimidinic) lyase activity and introduces nicks in the DNA strand. Cleaves the DNA backbone by beta-delta elimination to generate a single-strand break at the site of the removed base with both 3'- and 5'-phosphates. This is Formamidopyrimidine-DNA glycosylase from Proteus mirabilis (strain HI4320).